Reading from the N-terminus, the 148-residue chain is Prefoldin subunit 2 (148 aa).

Residues 87–114 (KDGLEEVVRKLYETLEKKKKDLTEFEAK) adopt a coiled-coil conformation. The span at 122–134 (QEDNKEGGNKKEG) shows a compositional bias: basic and acidic residues. The disordered stretch occupies residues 122–148 (QEDNKEGGNKKEGNAQGVLVGAASSSQ).

The protein belongs to the prefoldin subunit beta family. As to quaternary structure, heterohexamer of two PFD-alpha type and four PFD-beta type subunits forming prefoldin co-chaperone complex. Interacts with LSM8, a specific subunit of the LSM2-8 complex, which is a core component of the spliceosome.

Its subcellular location is the cytoplasm. The protein localises to the nucleus. Binds specifically to cytosolic chaperonin (c-CPN) and transfers target proteins to it. Binds to nascent polypeptide chain and promotes folding in an environment in which there are many competing pathways for nonnative proteins. Together with other chaperonins, contribute to the regulation of gene expression by modulating the spliceosome function on pre-mRNA splicing post-transcriptionally by acting as a co-chaperone of Hsp90 to control levels of LSM8. Required for microtubules (MTs) organization and dynamicity. Involved in the process leading to microtubules dissociation in response to gibberellic acid (GA) probably due to the DELLA proteins-mediated translocation of the prefoldin co-chaperone complex from the cytoplasm to the nucleus. The sequence is that of Prefoldin subunit 2 from Arabidopsis thaliana (Mouse-ear cress).